A 1132-amino-acid chain; its full sequence is Tyrosine-protein kinase JAK2 (1132 aa).

The interval 1 to 239 (MGMACLTMTE…RYRFRRFIQQ (239 aa)) is interaction with cytokine/interferon/growth hormone receptors. Positions 37-380 (PVLLVYLYHS…GYYRLTADAH (344 aa)) constitute an FERM domain. Position 119 is a phosphotyrosine; by autocatalysis (Tyr-119). Phosphotyrosine is present on residues Tyr-372 and Tyr-373. In terms of domain architecture, SH2; atypical spans 401-482 (HGPISMDFAI…SLKDLLNCYQ (82 aa)). Ser-523 carries the phosphoserine modification. A Protein kinase 1 domain is found at 545–809 (LIFNESLGQG…AIIRDLNSLF (265 aa)). Phosphotyrosine is present on residues Tyr-570 and Tyr-813. Residues 849 to 1126 (LKFLQQLGKG…RDLALRVDQI (278 aa)) enclose the Protein kinase 2 domain. 855 to 863 (LGKGNFGSV) is a binding site for ATP. Residue Tyr-868 is modified to Phosphotyrosine; by autocatalysis. Lys-882 is a binding site for ATP. A phosphotyrosine; by autocatalysis mark is found at Tyr-966 and Tyr-972. The Proton acceptor role is filled by Asp-976. Phosphotyrosine; by autocatalysis is present on residues Tyr-1007 and Tyr-1008.

It belongs to the protein kinase superfamily. Tyr protein kinase family. JAK subfamily. As to quaternary structure, interacts with IL23R, SKB1 and STAM2. Interacts with EPOR. Interacts with LYN. Interacts with SIRPA. Interacts with SH2B1. Interacts with TEC. Interacts with IFNGR2 (via intracellular domain). Interacts with LEPR (Isoform B). Interacts with HSP90AB1; promotes functional activation in a heat shock-dependent manner. Interacts with STRA6. Interacts with RHEX; this interaction occurs in a erythropoietin (EPO)-dependent manner. Interacts with ASB2; the interaction targets JAK2 for Notch-induced proteasomal degradation. It depends on Mg(2+) as a cofactor. Autophosphorylated, leading to regulate its activity. Leptin promotes phosphorylation on tyrosine residues, including phosphorylation on Tyr-813. Autophosphorylation on Tyr-119 in response to EPO down-regulates its kinase activity. Autophosphorylation on Tyr-868, Tyr-966 and Tyr-972 in response to growth hormone (GH) are required for maximal kinase activity. Also phosphorylated by TEC. Phosphorylated on tyrosine residues in response to interferon gamma signaling. Phosphorylated on tyrosine residues in response to a signaling cascade that is activated by increased cellular retinol. Post-translationally, undergoes Notch-induced ubiquitination and subsequent proteasomal degradation which is mediated by ASB1 or ASB2, the substrate-recognition components of probable ECS E3 ubiquitin-protein ligase complexes.

It is found in the endomembrane system. Its subcellular location is the cytoplasm. It localises to the nucleus. The enzyme catalyses L-tyrosyl-[protein] + ATP = O-phospho-L-tyrosyl-[protein] + ADP + H(+). Its activity is regulated as follows. Regulated by autophosphorylation, can both activate or decrease activity. Heme regulates its activity by enhancing the phosphorylation on Tyr-1007 and Tyr-1008. Non-receptor tyrosine kinase involved in various processes such as cell growth, development, differentiation or histone modifications. Mediates essential signaling events in both innate and adaptive immunity. In the cytoplasm, plays a pivotal role in signal transduction via its association with type I receptors such as growth hormone (GHR), prolactin (PRLR), leptin (LEPR), erythropoietin (EPOR), thrombopoietin (THPO); or type II receptors including IFN-alpha, IFN-beta, IFN-gamma and multiple interleukins. Following ligand-binding to cell surface receptors, phosphorylates specific tyrosine residues on the cytoplasmic tails of the receptor, creating docking sites for STATs proteins. Subsequently, phosphorylates the STATs proteins once they are recruited to the receptor. Phosphorylated STATs then form homodimer or heterodimers and translocate to the nucleus to activate gene transcription. For example, cell stimulation with erythropoietin (EPO) during erythropoiesis leads to JAK2 autophosphorylation, activation, and its association with erythropoietin receptor (EPOR) that becomes phosphorylated in its cytoplasmic domain. Then, STAT5 (STAT5A or STAT5B) is recruited, phosphorylated and activated by JAK2. Once activated, dimerized STAT5 translocates into the nucleus and promotes the transcription of several essential genes involved in the modulation of erythropoiesis. Part of a signaling cascade that is activated by increased cellular retinol and that leads to the activation of STAT5 (STAT5A or STAT5B). In addition, JAK2 mediates angiotensin-2-induced ARHGEF1 phosphorylation. Plays a role in cell cycle by phosphorylating CDKN1B. Cooperates with TEC through reciprocal phosphorylation to mediate cytokine-driven activation of FOS transcription. In the nucleus, plays a key role in chromatin by specifically mediating phosphorylation of 'Tyr-41' of histone H3 (H3Y41ph), a specific tag that promotes exclusion of CBX5 (HP1 alpha) from chromatin. Up-regulates the potassium voltage-gated channel activity of KCNA3. The protein is Tyrosine-protein kinase JAK2 of Pongo abelii (Sumatran orangutan).